A 377-amino-acid polypeptide reads, in one-letter code: O-phospho-L-seryl-tRNA:Cys-tRNA synthase (377 aa).

Pyridoxal 5'-phosphate-binding positions include 83-84, asparagine 188, and 211-213; these read AR and SGH. Lysine 214 is subject to N6-(pyridoxal phosphate)lysine.

This sequence belongs to the SepCysS family. Homodimer. Interacts with SepRS. The cofactor is pyridoxal 5'-phosphate.

The enzyme catalyses O-phospho-L-seryl-tRNA(Cys) + hydrogen sulfide + H(+) = L-cysteinyl-tRNA(Cys) + phosphate. Its function is as follows. Converts O-phospho-L-seryl-tRNA(Cys) (Sep-tRNA(Cys)) to L-cysteinyl-tRNA(Cys) (Cys-tRNA(Cys)). This is O-phospho-L-seryl-tRNA:Cys-tRNA synthase from Methanothermobacter thermautotrophicus (strain ATCC 29096 / DSM 1053 / JCM 10044 / NBRC 100330 / Delta H) (Methanobacterium thermoautotrophicum).